The following is a 300-amino-acid chain: Ribosomal protein L11 methyltransferase (300 aa).

S-adenosyl-L-methionine is bound by residues Thr152, Gly173, Asp195, and Asn234.

Belongs to the methyltransferase superfamily. PrmA family.

It is found in the cytoplasm. The catalysed reaction is L-lysyl-[protein] + 3 S-adenosyl-L-methionine = N(6),N(6),N(6)-trimethyl-L-lysyl-[protein] + 3 S-adenosyl-L-homocysteine + 3 H(+). Functionally, methylates ribosomal protein L11. This Cupriavidus necator (strain ATCC 17699 / DSM 428 / KCTC 22496 / NCIMB 10442 / H16 / Stanier 337) (Ralstonia eutropha) protein is Ribosomal protein L11 methyltransferase.